The chain runs to 114 residues: Large ribosomal subunit protein uL22 (114 aa).

This sequence belongs to the universal ribosomal protein uL22 family. In terms of assembly, part of the 50S ribosomal subunit.

This protein binds specifically to 23S rRNA; its binding is stimulated by other ribosomal proteins, e.g. L4, L17, and L20. It is important during the early stages of 50S assembly. It makes multiple contacts with different domains of the 23S rRNA in the assembled 50S subunit and ribosome. Functionally, the globular domain of the protein is located near the polypeptide exit tunnel on the outside of the subunit, while an extended beta-hairpin is found that lines the wall of the exit tunnel in the center of the 70S ribosome. The protein is Large ribosomal subunit protein uL22 of Aeromonas salmonicida (strain A449).